A 486-amino-acid chain; its full sequence is Aspartyl/glutamyl-tRNA(Asn/Gln) amidotransferase subunit B (486 aa).

It belongs to the GatB/GatE family. GatB subfamily. As to quaternary structure, heterotrimer of A, B and C subunits.

The catalysed reaction is L-glutamyl-tRNA(Gln) + L-glutamine + ATP + H2O = L-glutaminyl-tRNA(Gln) + L-glutamate + ADP + phosphate + H(+). The enzyme catalyses L-aspartyl-tRNA(Asn) + L-glutamine + ATP + H2O = L-asparaginyl-tRNA(Asn) + L-glutamate + ADP + phosphate + 2 H(+). Allows the formation of correctly charged Asn-tRNA(Asn) or Gln-tRNA(Gln) through the transamidation of misacylated Asp-tRNA(Asn) or Glu-tRNA(Gln) in organisms which lack either or both of asparaginyl-tRNA or glutaminyl-tRNA synthetases. The reaction takes place in the presence of glutamine and ATP through an activated phospho-Asp-tRNA(Asn) or phospho-Glu-tRNA(Gln). The chain is Aspartyl/glutamyl-tRNA(Asn/Gln) amidotransferase subunit B from Herminiimonas arsenicoxydans.